The sequence spans 145 residues: 3-hydroxyacyl-[acyl-carrier-protein] dehydratase FabZ (145 aa).

Residue H52 is part of the active site.

It belongs to the thioester dehydratase family. FabZ subfamily.

The protein localises to the cytoplasm. The catalysed reaction is a (3R)-hydroxyacyl-[ACP] = a (2E)-enoyl-[ACP] + H2O. Its function is as follows. Involved in unsaturated fatty acids biosynthesis. Catalyzes the dehydration of short chain beta-hydroxyacyl-ACPs and long chain saturated and unsaturated beta-hydroxyacyl-ACPs. The chain is 3-hydroxyacyl-[acyl-carrier-protein] dehydratase FabZ from Deinococcus radiodurans (strain ATCC 13939 / DSM 20539 / JCM 16871 / CCUG 27074 / LMG 4051 / NBRC 15346 / NCIMB 9279 / VKM B-1422 / R1).